Reading from the N-terminus, the 217-residue chain is Ras-related protein RIC2 (217 aa).

Residues 21–28, 69–73, and 127–130 contribute to the GTP site; these read GDSGVGKS, DTAGQ, and NKSD. Residues Cys-214 and Cys-215 are each lipidated (S-geranylgeranyl cysteine).

It belongs to the small GTPase superfamily. Rab family.

The protein localises to the cell membrane. Its function is as follows. Possesses GTPase activity. The sequence is that of Ras-related protein RIC2 (RIC2) from Oryza sativa subsp. japonica (Rice).